The sequence spans 129 residues: Small ribosomal subunit protein uS11 (129 aa).

Belongs to the universal ribosomal protein uS11 family. As to quaternary structure, part of the 30S ribosomal subunit. Interacts with proteins S7 and S18. Binds to IF-3.

Functionally, located on the platform of the 30S subunit, it bridges several disparate RNA helices of the 16S rRNA. Forms part of the Shine-Dalgarno cleft in the 70S ribosome. The sequence is that of Small ribosomal subunit protein uS11 from Limosilactobacillus fermentum (strain NBRC 3956 / LMG 18251) (Lactobacillus fermentum).